The primary structure comprises 1210 residues: MKSEKVLVLRTCANNMTDHCGLVWPILGLVECKFWEPTIKLENGLTGALWGQGSSAQLSMNADAKWVVCEVTMGDLIFLENNEGVKFPRAEVVHVGTRSSALGYISDNVSKHEACSSNLIEKFTFSDVKSETRNISPALPVTVDNMPNGVNRSTTVRNTQTLETAVYGSTLTGANQSQLIAGYGSTETAGDSSTLIAGYGSTGTSGSDSSIIAGYGSTGTAGSDSSLIAGYGSTQTAGGDSSLTAGYGSTQTAQVGSNLTAGYGSTGTAGPDSSLIAGYGSTQTAGGESSLTAGYGSTQTAQVGSDLTAGYGSTGTAGSDSSLIAGYGSTQTAGGDSSLTAGYGSTQTAQVGSNLTAGYGSTGTAGPDSSLIAGYGSTQTAGGESSLTAGYGSTQTAQVGSDLTAGYGSTGTAGSDSSLIAGYGSTQTAGGESSLTAGYGSTQTAQVGSDLTAGYGSTGTAGSDSSLIAGYGSTQTAGGDSSLTAGYGSTQTAQVGSDLTAGYGSTGTAGSDSSLIAGYGSTQTAGGDSSLTAGYGSTQTAQVGSDLTAGYGSTGTAGSDSSLIAGYGSTQTAGGDSSLTAGYGSTQTAQMGSNLTAGYGSTGTAGSDSSLIAGYGSTQTAGGDSSLTAGYGSTQTAGHGSILTAGYGSTQTAQEGSSLTAGYGSTSTAGPESSLIAGYGSTQTAGHESTLTAGYGSTQTAQEDSSLTAGYGSTSTAGFNSSLIAGYGSTQTSGYESILTAGYGSTQTAQDNSSLTTGYGSTSTAGYQSSLIAGYGSTQTAGYESTLTAGYGSCQTAQEQSWLTTGYGSTSTAGYESRLIAGYGSTQTAGYKSILTAGYGSTQTAQEESSLTAGYGSTSTAGYASSLIAGYGSTQTAGYDSILTAGYGSTLTALDSSTLTAGYGSTETAGFGSSLMAGYGSSQIAGYGSTLTAGYGSTQMAERDSTLTAGYGSTGTAGQDSSLIAGYGSSLTSGMRSYLTAGYGSTLISGLQSVLTAGYGSSLTSGIRSSLTAGYGSNQIASHKSSLIAGHESTQIAGHKSMLIAGKGSSQTAGSRSTLIAGANSVQMAGDRSRLTAGANSIQTAGDRSKLLAGSNSYLTAGDRSKLTAGDDCVLMAGDRSKLTAGKNCVLTAGADSRLIGSLGSTLSGGENSTLIFRCWDGKRYTNVVVKTGTDEVEADVPYQIDEDSNVLIKAEDNSDTPVDQSQIQP.

The tract at residues 165–1156 is octapeptide periodicity; it reads AVYGSTLTGA…LSGGENSTLI (992 aa).

It belongs to the bacterial ice nucleation protein family.

It localises to the cell outer membrane. Functionally, ice nucleation proteins enable bacteria to nucleate crystallization in supercooled water. The sequence is that of Ice nucleation protein (inaW) from Pseudomonas fluorescens.